The sequence spans 331 residues: MMRNVLLLCGGGSSEHEISLLSSEYLQQQLGLIENVNVLKVEIKNEGWFDQKERLVYLDIHTKSVKSDEFNESIDIDFIVPCIHGFPGETGDIQSLFELAGIPYLGCGPEASSNSFNKITSKLWYDAIGIPNTPYLFLTENNEESHQLSREAFDKWGKLFVKAARQGSSVGCYSVTNIEQLSDAIDKAFGFSHQVLVEKAVKPRELEVSAYEMNGQLHISKPGEIIAPDGAFYSYDEKYSAGSHSITEVEAKNLTEQQLATIQLCSEKVFRQMNLRHLSRIDFFLTSEGEIYLNEVNTFPGMTKISMFPKMLQHNGHKFHEFLADCIERSL.

Residues 122-328 enclose the ATP-grasp domain; the sequence is KLWYDAIGIP…FHEFLADCIE (207 aa). 152–207 contacts ATP; that stretch reads AFDKWGKLFVKAARQGSSVGCYSVTNIEQLSDAIDKAFGFSHQVLVEKAVKPRELE. Mg(2+)-binding residues include Asp-282, Glu-295, and Asn-297.

It belongs to the D-alanine--D-alanine ligase family. The cofactor is Mg(2+). Mn(2+) is required as a cofactor.

It localises to the cytoplasm. The catalysed reaction is 2 D-alanine + ATP = D-alanyl-D-alanine + ADP + phosphate + H(+). Its pathway is cell wall biogenesis; peptidoglycan biosynthesis. In terms of biological role, cell wall formation. This chain is D-alanine--D-alanine ligase, found in Vibrio vulnificus (strain YJ016).